A 247-amino-acid polypeptide reads, in one-letter code: 6-phosphogluconolactonase (247 aa).

The protein belongs to the glucosamine/galactosamine-6-phosphate isomerase family. 6-phosphogluconolactonase subfamily.

It catalyses the reaction 6-phospho-D-glucono-1,5-lactone + H2O = 6-phospho-D-gluconate + H(+). Its pathway is carbohydrate degradation; pentose phosphate pathway; D-ribulose 5-phosphate from D-glucose 6-phosphate (oxidative stage): step 2/3. Its function is as follows. Hydrolysis of 6-phosphogluconolactone to 6-phosphogluconate. This Mycobacterium leprae (strain TN) protein is 6-phosphogluconolactonase (pgl).